Consider the following 207-residue polypeptide: 3-demethoxyubiquinol 3-hydroxylase (207 aa).

The span at 22–32 (ERANPADRLAP) shows a compositional bias: basic and acidic residues. Positions 22–41 (ERANPADRLAPETEQMNPEE) are disordered. Residues E56, E86, H89, E138, E170, and H173 each contribute to the Fe cation site.

The protein belongs to the COQ7 family. Fe cation is required as a cofactor.

It localises to the cell membrane. It catalyses the reaction a 5-methoxy-2-methyl-3-(all-trans-polyprenyl)benzene-1,4-diol + AH2 + O2 = a 3-demethylubiquinol + A + H2O. It functions in the pathway cofactor biosynthesis; ubiquinone biosynthesis. Its function is as follows. Catalyzes the hydroxylation of 2-nonaprenyl-3-methyl-6-methoxy-1,4-benzoquinol during ubiquinone biosynthesis. This Cupriavidus metallidurans (strain ATCC 43123 / DSM 2839 / NBRC 102507 / CH34) (Ralstonia metallidurans) protein is 3-demethoxyubiquinol 3-hydroxylase.